The following is a 341-amino-acid chain: Methionine import ATP-binding protein MetN 3 (341 aa).

One can recognise an ABC transporter domain in the interval 2-241; that stretch reads ILLENVKKIY…PQQDITKRFV (240 aa). 38–45 contributes to the ATP binding site; it reads GYSGAGKS.

It belongs to the ABC transporter superfamily. Methionine importer (TC 3.A.1.24) family. The complex is composed of two ATP-binding proteins (MetN), two transmembrane proteins (MetI) and a solute-binding protein (MetQ).

The protein resides in the cell membrane. It catalyses the reaction L-methionine(out) + ATP + H2O = L-methionine(in) + ADP + phosphate + H(+). The enzyme catalyses D-methionine(out) + ATP + H2O = D-methionine(in) + ADP + phosphate + H(+). In terms of biological role, part of the ABC transporter complex MetNIQ involved in methionine import. Responsible for energy coupling to the transport system. This chain is Methionine import ATP-binding protein MetN 3, found in Bacillus anthracis.